The sequence spans 151 residues: Large ribosomal subunit protein eL8 (151 aa).

It belongs to the eukaryotic ribosomal protein eL8 family. Part of the 50S ribosomal subunit. Probably part of the RNase P complex.

The protein resides in the cytoplasm. In terms of biological role, multifunctional RNA-binding protein that recognizes the K-turn motif in ribosomal RNA, the RNA component of RNase P, box H/ACA, box C/D and box C'/D' sRNAs. This is Large ribosomal subunit protein eL8 from Pyrobaculum neutrophilum (strain DSM 2338 / JCM 9278 / NBRC 100436 / V24Sta) (Thermoproteus neutrophilus).